We begin with the raw amino-acid sequence, 520 residues long: Cytochrome P450 4F2 (520 aa).

The propeptide occupies 1–4 (MSQL). Positions 328 and 468 each coordinate heme.

It belongs to the cytochrome P450 family. Requires heme as cofactor. Liver. Also present in kidney: specifically expressed in the S2 and S3 segments of proximal tubules in cortex and outer medulla.

The protein resides in the microsome membrane. The protein localises to the endoplasmic reticulum membrane. It carries out the reaction an organic molecule + reduced [NADPH--hemoprotein reductase] + O2 = an alcohol + oxidized [NADPH--hemoprotein reductase] + H2O + H(+). The enzyme catalyses (5Z,8Z,11Z,14Z)-eicosatetraenoate + reduced [NADPH--hemoprotein reductase] + O2 = 20-hydroxy-(5Z,8Z,11Z,14Z)-eicosatetraenoate + oxidized [NADPH--hemoprotein reductase] + H2O + H(+). The catalysed reaction is (5Z,8Z,11Z)-eicosatrienoate + reduced [NADPH--hemoprotein reductase] + O2 = 20-hydroxy-(5Z,8Z,11Z)-eicosatrienoate + oxidized [NADPH--hemoprotein reductase] + H2O + H(+). It catalyses the reaction (5Z,8Z,11Z,14Z,17Z)-eicosapentaenoate + reduced [NADPH--hemoprotein reductase] + O2 = 20-hydroxy-(5Z,8Z,11Z,14Z,17Z)-eicosapentaenoate + oxidized [NADPH--hemoprotein reductase] + H2O + H(+). It carries out the reaction (4Z,7Z,10Z,13Z,16Z,19Z)-docosahexaenoate + reduced [NADPH--hemoprotein reductase] + O2 = 22-hydroxy-(4Z,7Z,10Z,13Z,16Z,19Z)-docosahexaenoate + oxidized [NADPH--hemoprotein reductase] + H2O + H(+). The enzyme catalyses 8,9-epoxy-(5Z,11Z,14Z)-eicosatrienoate + reduced [NADPH--hemoprotein reductase] + O2 = 20-hydroxy-8,9-epoxy-(5Z,11Z,14Z)-eicosatrienoate + oxidized [NADPH--hemoprotein reductase] + H2O + H(+). The catalysed reaction is (9S,10R)-epoxy-octadecanoate + reduced [NADPH--hemoprotein reductase] + O2 = 18-hydroxy-(9S,10R)-epoxy-octadecanoate + oxidized [NADPH--hemoprotein reductase] + H2O + H(+). It catalyses the reaction (9R,10S)-epoxy-octadecanoate + reduced [NADPH--hemoprotein reductase] + O2 = 18-hydroxy-(9R,10S)-epoxy-octadecanoate + oxidized [NADPH--hemoprotein reductase] + H2O + H(+). It carries out the reaction 12,13-epoxy-(9Z)-octadecenoate + reduced [NADPH--hemoprotein reductase] + O2 = 18-hydroxy-12,13-epoxy-(9Z)-octadecenoate + oxidized [NADPH--hemoprotein reductase] + H2O + H(+). The enzyme catalyses 9,10-epoxy-(12Z)-octadecenoate + reduced [NADPH--hemoprotein reductase] + O2 = 18-hydroxy-9,10-epoxy-(12Z)-octadecenoate + oxidized [NADPH--hemoprotein reductase] + H2O + H(+). The catalysed reaction is 8-hydroxy-(5Z,9E,11Z,14Z)-eicosatetraenoate + reduced [NADPH--hemoprotein reductase] + O2 = 8,20-dihydroxy-(5Z,9E,11Z,14Z)-eicosatetraenoate + oxidized [NADPH--hemoprotein reductase] + H2O + H(+). It catalyses the reaction 12-hydroxy-(5Z,8Z,10E,14Z)-eicosatetraenoate + reduced [NADPH--hemoprotein reductase] + O2 = 12,20-dihydroxy-(5Z,8Z,10E,14Z)-eicosatetraenoate + oxidized [NADPH--hemoprotein reductase] + H2O + H(+). It carries out the reaction 12-hydroxyoctadecanoate + reduced [NADPH--hemoprotein reductase] + O2 = 12,18-dihydroxyoctadecanoate + oxidized [NADPH--hemoprotein reductase] + H2O + H(+). The enzyme catalyses docosanoate + reduced [NADPH--hemoprotein reductase] + O2 = 22-hydroxydocosanoate + oxidized [NADPH--hemoprotein reductase] + H2O + H(+). The catalysed reaction is 22-hydroxydocosanoate + reduced [NADPH--hemoprotein reductase] + O2 = 22-oxodocosanoate + oxidized [NADPH--hemoprotein reductase] + 2 H2O + H(+). It catalyses the reaction 22-oxodocosanoate + reduced [NADPH--hemoprotein reductase] + O2 = docosanedioate + oxidized [NADPH--hemoprotein reductase] + H2O + 2 H(+). It carries out the reaction tetracosanoate + reduced [NADPH--hemoprotein reductase] + O2 = 24-hydroxytetracosanoate + oxidized [NADPH--hemoprotein reductase] + H2O + H(+). The enzyme catalyses hexacosanoate + reduced [NADPH--hemoprotein reductase] + O2 = 26-hydroxyhexacosanoate + oxidized [NADPH--hemoprotein reductase] + H2O + H(+). The catalysed reaction is 26-hydroxyhexacosanoate + reduced [NADPH--hemoprotein reductase] + O2 = 26-oxohexacosanoate + oxidized [NADPH--hemoprotein reductase] + 2 H2O + H(+). It catalyses the reaction 26-oxohexacosanoate + reduced [NADPH--hemoprotein reductase] + O2 = hexacosanedioate + oxidized [NADPH--hemoprotein reductase] + H2O + 2 H(+). It carries out the reaction 3-hydroxyoctadecanoate + reduced [NADPH--hemoprotein reductase] + O2 = 3,18-dihydroxyoctadecanoate + oxidized [NADPH--hemoprotein reductase] + H2O + H(+). The enzyme catalyses 3-hydroxyhexadecanoate + reduced [NADPH--hemoprotein reductase] + O2 = 3,16-dihydroxyhexadecanoate + oxidized [NADPH--hemoprotein reductase] + H2O + H(+). The catalysed reaction is leukotriene B4 + reduced [NADPH--hemoprotein reductase] + O2 = 20-hydroxy-leukotriene B4 + oxidized [NADPH--hemoprotein reductase] + H2O + H(+). It catalyses the reaction 6-trans-leukotriene B4 + reduced [NADPH--hemoprotein reductase] + O2 = 20-hydroxy-6-trans-leukotriene B4 + oxidized [NADPH--hemoprotein reductase] + H2O + H(+). It carries out the reaction lipoxin A4 + reduced [NADPH--hemoprotein reductase] + O2 = 20-hydroxy-lipoxin A4 + oxidized [NADPH--hemoprotein reductase] + H2O + H(+). The enzyme catalyses menaquinone-4 + reduced [NADPH--hemoprotein reductase] + O2 = omega-hydroxymenaquinone-4 + oxidized [NADPH--hemoprotein reductase] + H2O + H(+). The catalysed reaction is phylloquinone + reduced [NADPH--hemoprotein reductase] + O2 = omega-hydroxyphylloquinone + oxidized [NADPH--hemoprotein reductase] + H2O + H(+). It catalyses the reaction (+)-alpha-tocopherol + reduced [NADPH--hemoprotein reductase] + O2 = 13-hydroxy-alpha-tocopherol + oxidized [NADPH--hemoprotein reductase] + H2O + H(+). It carries out the reaction gamma-tocopherol + NADPH + O2 + H(+) = 13-hydroxy-gamma-tocopherol + NADP(+) + H2O. It participates in lipid metabolism; arachidonate metabolism. The protein operates within lipid metabolism; leukotriene B4 degradation. It functions in the pathway cofactor degradation; phylloquinone degradation. With respect to regulation, inhibited by dietary sesamin. Its function is as follows. A cytochrome P450 monooxygenase involved in the metabolism of various endogenous substrates, including fatty acids, eicosanoids and vitamins. Mechanistically, uses molecular oxygen inserting one oxygen atom into a substrate, and reducing the second into a water molecule, with two electrons provided by NADPH via cytochrome P450 reductase (CPR; NADPH-ferrihemoprotein reductase). Catalyzes predominantly the oxidation of the terminal carbon (omega-oxidation) of long- and very long-chain fatty acids. Displays high omega-hydroxylase activity toward polyunsaturated fatty acids (PUFAs). Participates in the conversion of arachidonic acid to omega-hydroxyeicosatetraenoic acid (20-HETE), a signaling molecule acting both as vasoconstrictive and natriuretic with overall effect on arterial blood pressure. Plays a role in the oxidative inactivation of eicosanoids, including both pro-inflammatory and anti-inflammatory mediators such as leukotriene B4 (LTB4), lipoxin A4 (LXA4), and several HETEs. Catalyzes omega-hydroxylation of 3-hydroxy fatty acids. Converts monoepoxides of linoleic acid leukotoxin and isoleukotoxin to omega-hydroxylated metabolites. Contributes to the degradation of very long-chain fatty acids (VLCFAs) by catalyzing successive omega-oxidations and chain shortening. Plays an important role in vitamin metabolism by chain shortening. Catalyzes omega-hydroxylation of the phytyl chain of tocopherols (forms of vitamin E), with preference for gamma-tocopherols over alpha-tocopherols, thus promoting retention of alpha-tocopherols in tissues. Omega-hydroxylates and inactivates phylloquinone (vitamin K1), and menaquinone-4 (MK-4, a form of vitamin K2), both acting as cofactors in blood coagulation. This chain is Cytochrome P450 4F2, found in Homo sapiens (Human).